The following is a 360-amino-acid chain: Fructose-bisphosphate aldolase 1 (360 aa).

Residue S63 participates in D-glyceraldehyde 3-phosphate binding. D110 (proton donor) is an active-site residue. Zn(2+)-binding residues include H111, D145, E175, and H227. G228 serves as a coordination point for dihydroxyacetone phosphate. H266 contributes to the Zn(2+) binding site. 267 to 269 (GGS) lines the dihydroxyacetone phosphate pocket.

This sequence belongs to the class II fructose-bisphosphate aldolase family. In terms of assembly, homodimer. Zn(2+) is required as a cofactor.

The enzyme catalyses beta-D-fructose 1,6-bisphosphate = D-glyceraldehyde 3-phosphate + dihydroxyacetone phosphate. It participates in carbohydrate degradation; glycolysis; D-glyceraldehyde 3-phosphate and glycerone phosphate from D-glucose: step 4/4. In terms of biological role, catalyzes the aldol condensation of dihydroxyacetone phosphate (DHAP or glycerone-phosphate) with glyceraldehyde 3-phosphate (G3P) to form fructose 1,6-bisphosphate (FBP) in gluconeogenesis and the reverse reaction in glycolysis. The chain is Fructose-bisphosphate aldolase 1 (FBA1) from Paracoccidioides lutzii (strain ATCC MYA-826 / Pb01) (Paracoccidioides brasiliensis).